The chain runs to 215 residues: Large ribosomal subunit protein bL25 (215 aa).

Positions 160–215 (GDLPLPEGSELVTEPEETVMSVVAPETEEEPDTEEDEEGEEDVEEESEEEEEESEE) are disordered. A compositionally biased stretch (acidic residues) spans 185-215 (ETEEEPDTEEDEEGEEDVEEESEEEEEESEE).

The protein belongs to the bacterial ribosomal protein bL25 family. CTC subfamily. As to quaternary structure, part of the 50S ribosomal subunit; part of the 5S rRNA/L5/L18/L25 subcomplex. Contacts the 5S rRNA. Binds to the 5S rRNA independently of L5 and L18.

Functionally, this is one of the proteins that binds to the 5S RNA in the ribosome where it forms part of the central protuberance. The chain is Large ribosomal subunit protein bL25 from Natranaerobius thermophilus (strain ATCC BAA-1301 / DSM 18059 / JW/NM-WN-LF).